The primary structure comprises 311 residues: HPr kinase/phosphorylase (311 aa).

Active-site residues include H139 and K160. Residue 154–161 (GASGVGKS) participates in ATP binding. S161 is a binding site for Mg(2+). The Proton acceptor; for phosphorylation activity. Proton donor; for dephosphorylation activity role is filled by D178. An important for the catalytic mechanism of both phosphorylation and dephosphorylation region spans residues 202-211 (LEIRGIGIID). E203 is a binding site for Mg(2+). R244 is a catalytic residue. The tract at residues 265–270 (PVRPGR) is important for the catalytic mechanism of dephosphorylation.

It belongs to the HPrK/P family. Homohexamer. Mg(2+) serves as cofactor.

It carries out the reaction [HPr protein]-L-serine + ATP = [HPr protein]-O-phospho-L-serine + ADP + H(+). It catalyses the reaction [HPr protein]-O-phospho-L-serine + phosphate + H(+) = [HPr protein]-L-serine + diphosphate. In terms of biological role, catalyzes the ATP- as well as the pyrophosphate-dependent phosphorylation of a specific serine residue in HPr, a phosphocarrier protein of the phosphoenolpyruvate-dependent sugar phosphotransferase system (PTS). HprK/P also catalyzes the pyrophosphate-producing, inorganic phosphate-dependent dephosphorylation (phosphorolysis) of seryl-phosphorylated HPr (P-Ser-HPr). The two antagonistic activities of HprK/P are regulated by several intracellular metabolites, which change their concentration in response to the absence or presence of rapidly metabolisable carbon sources (glucose, fructose, etc.) in the growth medium. Therefore, by controlling the phosphorylation state of HPr, HPrK/P is a sensor enzyme that plays a major role in the regulation of carbon metabolism and sugar transport: it mediates carbon catabolite repression (CCR), and regulates PTS-catalyzed carbohydrate uptake and inducer exclusion. This is HPr kinase/phosphorylase from Exiguobacterium sibiricum (strain DSM 17290 / CCUG 55495 / CIP 109462 / JCM 13490 / 255-15).